The sequence spans 55 residues: MPQLNPHPWFFIMLASWLTFSLIIQPKLLTFVTMNPPSNKPPIAPSTTPWTWPWT.

Residues 10–32 form a helical membrane-spanning segment; that stretch reads FFIMLASWLTFSLIIQPKLLTFV.

The protein belongs to the ATPase protein 8 family. In terms of assembly, component of the ATP synthase complex composed at least of ATP5F1A/subunit alpha, ATP5F1B/subunit beta, ATP5MC1/subunit c (homooctomer), MT-ATP6/subunit a, MT-ATP8/subunit 8, ATP5ME/subunit e, ATP5MF/subunit f, ATP5MG/subunit g, ATP5MK/subunit k, ATP5MJ/subunit j, ATP5F1C/subunit gamma, ATP5F1D/subunit delta, ATP5F1E/subunit epsilon, ATP5PF/subunit F6, ATP5PB/subunit b, ATP5PD/subunit d, ATP5PO/subunit OSCP. ATP synthase complex consists of a soluble F(1) head domain (subunits alpha(3) and beta(3)) - the catalytic core - and a membrane F(0) domain - the membrane proton channel (subunits c, a, 8, e, f, g, k and j). These two domains are linked by a central stalk (subunits gamma, delta, and epsilon) rotating inside the F1 region and a stationary peripheral stalk (subunits F6, b, d, and OSCP).

It is found in the mitochondrion membrane. In terms of biological role, subunit 8, of the mitochondrial membrane ATP synthase complex (F(1)F(0) ATP synthase or Complex V) that produces ATP from ADP in the presence of a proton gradient across the membrane which is generated by electron transport complexes of the respiratory chain. ATP synthase complex consist of a soluble F(1) head domain - the catalytic core - and a membrane F(1) domain - the membrane proton channel. These two domains are linked by a central stalk rotating inside the F(1) region and a stationary peripheral stalk. During catalysis, ATP synthesis in the catalytic domain of F(1) is coupled via a rotary mechanism of the central stalk subunits to proton translocation. In vivo, can only synthesize ATP although its ATP hydrolase activity can be activated artificially in vitro. Part of the complex F(0) domain. The chain is ATP synthase F(0) complex subunit 8 from Loxigilla noctis (Lesser Antillean bullfinch).